Reading from the N-terminus, the 58-residue chain is Bowman-Birk type wound-induced trypsin inhibitor (58 aa).

Cystine bridges form between Cys4–Cys57, Cys5–Cys20, Cys8–Cys53, Cys10–Cys18, Cys27–Cys34, Cys31–Cys46, and Cys36–Cys44.

Belongs to the Bowman-Birk serine protease inhibitor family.

In Medicago sativa (Alfalfa), this protein is Bowman-Birk type wound-induced trypsin inhibitor.